We begin with the raw amino-acid sequence, 400 residues long: Cell division protein FtsZ 2 (400 aa).

Positions 1–16 (MQDIVREAMERDEAER) are enriched in basic and acidic residues. The segment at 1-30 (MQDIVREAMERDEAERQTQSSLEDSDDQFG) is disordered. Residues 41–45 (GAGNN), 128–130 (GTG), glutamate 159, arginine 162, and aspartate 205 each bind GTP. The tract at residues 338-400 (VLGPSTQKQA…EKNNGLDVIR (63 aa)) is disordered. Over residues 352 to 364 (QSIQSRESQQQHS) the composition is skewed to low complexity. Residues 365–382 (GSEFDSSERAQTAQSGTW) are compositionally biased toward polar residues. Basic and acidic residues predominate over residues 385 to 400 (GGRDEVEKNNGLDVIR).

The protein belongs to the FtsZ family. Homodimer. Polymerizes to form a dynamic ring structure in a strictly GTP-dependent manner. Interacts directly with several other division proteins. Interacts with SepF.

The protein resides in the cytoplasm. Functionally, essential cell division protein that forms a contractile ring structure (Z ring) at the future cell division site. The regulation of the ring assembly controls the timing and the location of cell division. One of the functions of the FtsZ ring is to recruit other cell division proteins to the septum to produce a new cell wall between the dividing cells. Binds GTP and shows GTPase activity. Required for division ring constriction. The protein is Cell division protein FtsZ 2 of Haloferax volcanii (strain ATCC 29605 / DSM 3757 / JCM 8879 / NBRC 14742 / NCIMB 2012 / VKM B-1768 / DS2) (Halobacterium volcanii).